The chain runs to 704 residues: Cystathionine beta-synthase cbs-1 (704 aa).

Pyridoxal 5'-phosphate contacts are provided by residues asparagine 454, 562–566 (GTGGT), and serine 652.

It belongs to the cysteine synthase/cystathionine beta-synthase family. In terms of assembly, monomer. As to quaternary structure, does not bind pyridoxal 5'-phosphate, PLP; which may explain why this isoform has virtually undetectable catalytic activity. It depends on pyridoxal 5'-phosphate as a cofactor.

It is found in the cytoplasm. The enzyme catalyses L-homocysteine + L-serine = L,L-cystathionine + H2O. Its pathway is amino-acid biosynthesis; L-cysteine biosynthesis; L-cysteine from L-homocysteine and L-serine: step 1/2. In terms of biological role, hydro-lyase catalyzing the first step of the transsulfuration pathway, where the hydroxyl group of L-serine is displaced by L-homocysteine in a beta-replacement reaction to form L-cystathionine, the precursor of L-cysteine. Plays a role in maintaining homocysteine homeostasis. Involved in cold-induced somatic longevity mediated by prostaglandin E2 (PGE2) signals from adult germ cells, perhaps acting via a role in the production of hydrogen sulfide (H2S). Required for normal development. This is Cystathionine beta-synthase cbs-1 from Caenorhabditis elegans.